Here is a 407-residue protein sequence, read N- to C-terminus: MKSILWHNLKLCAHGDPNDTIADAAIAVNGDGTIAWTGRASDVPAGYVHWPREDLRGAWVTPGLVDCHTHLVYGGQRADEFAQRLAGASYEEIARRGGGIVSTVRATRDASEAALFEQACARLRPLLAEGVTAIEIKSGYGLELASERRMLRVARQLGERFPVSVYTTFLGAHALPPEYAGRADEYIDEVCERMLPALADEGLVDAVDVFCERIGFTLAQSERVFEAAARRGLPVKMHAEQLSNGGGSALAARYRALSADHLEYLDAAGVAAMRASGTTAVLLPGAYYFIRETKLPPIDLLRRHGVPIALATDHNPGTSPLTSLLLTMNMGCTVFKLTVQEALLGVTRHAAAALGASDRHGSLAPGRQADFAVWPVSTLAELAYWFGRPLCERVVKGGVTVFTRDAR.

H68 and H70 together coordinate Fe(3+). The Zn(2+) site is built by H68 and H70. 3 residues coordinate 4-imidazolone-5-propanoate: R77, Y140, and H173. Y140 lines the N-formimidoyl-L-glutamate pocket. H238 lines the Fe(3+) pocket. H238 contributes to the Zn(2+) binding site. Q241 contacts 4-imidazolone-5-propanoate. Residue D313 participates in Fe(3+) binding. D313 contributes to the Zn(2+) binding site. 2 residues coordinate N-formimidoyl-L-glutamate: N315 and G317. Position 318 (T318) interacts with 4-imidazolone-5-propanoate.

Belongs to the metallo-dependent hydrolases superfamily. HutI family. The cofactor is Zn(2+). Requires Fe(3+) as cofactor.

Its subcellular location is the cytoplasm. The catalysed reaction is 4-imidazolone-5-propanoate + H2O = N-formimidoyl-L-glutamate. Its pathway is amino-acid degradation; L-histidine degradation into L-glutamate; N-formimidoyl-L-glutamate from L-histidine: step 3/3. Functionally, catalyzes the hydrolytic cleavage of the carbon-nitrogen bond in imidazolone-5-propanoate to yield N-formimidoyl-L-glutamate. It is the third step in the universal histidine degradation pathway. The protein is Imidazolonepropionase of Burkholderia pseudomallei (strain 668).